A 172-amino-acid polypeptide reads, in one-letter code: Shikimate kinase (172 aa).

11–16 (GAGKST) is a binding site for ATP. Ser15 contributes to the Mg(2+) binding site. Substrate-binding residues include Asp33, Arg57, and Gly79. Arg117 is an ATP binding site. Arg136 contacts substrate. Arg153 serves as a coordination point for ATP.

Belongs to the shikimate kinase family. In terms of assembly, monomer. Requires Mg(2+) as cofactor.

It localises to the cytoplasm. The enzyme catalyses shikimate + ATP = 3-phosphoshikimate + ADP + H(+). Its pathway is metabolic intermediate biosynthesis; chorismate biosynthesis; chorismate from D-erythrose 4-phosphate and phosphoenolpyruvate: step 5/7. Catalyzes the specific phosphorylation of the 3-hydroxyl group of shikimic acid using ATP as a cosubstrate. In Pseudomonas syringae pv. syringae (strain B728a), this protein is Shikimate kinase.